The following is a 345-amino-acid chain: Dihydroorotate dehydrogenase (quinone) (345 aa).

FMN contacts are provided by residues 65 to 69 (AGLDK) and T89. K69 contacts substrate. Residue 114 to 118 (NRLGF) participates in substrate binding. N146 and N179 together coordinate FMN. N179 is a binding site for substrate. The active-site Nucleophile is S182. N184 is a substrate binding site. FMN-binding residues include K224 and T252. 253–254 (NT) is a substrate binding site. FMN-binding positions include G275, G304, and 325–326 (YT).

This sequence belongs to the dihydroorotate dehydrogenase family. Type 2 subfamily. In terms of assembly, monomer. FMN is required as a cofactor.

The protein localises to the cell membrane. The enzyme catalyses (S)-dihydroorotate + a quinone = orotate + a quinol. It participates in pyrimidine metabolism; UMP biosynthesis via de novo pathway; orotate from (S)-dihydroorotate (quinone route): step 1/1. Functionally, catalyzes the conversion of dihydroorotate to orotate with quinone as electron acceptor. In Leptothrix cholodnii (strain ATCC 51168 / LMG 8142 / SP-6) (Leptothrix discophora (strain SP-6)), this protein is Dihydroorotate dehydrogenase (quinone).